Here is a 1427-residue protein sequence, read N- to C-terminus: DNA-directed RNA polymerase subunit beta' (1427 aa).

C70, C72, C85, and C88 together coordinate Zn(2+). Mg(2+) is bound by residues D461, D463, and D465. Positions 809, 882, 889, and 892 each coordinate Zn(2+). Positions E1394–E1427 are disordered. Residues V1417–E1427 show a composition bias toward basic and acidic residues.

Belongs to the RNA polymerase beta' chain family. The RNAP catalytic core consists of 2 alpha, 1 beta, 1 beta' and 1 omega subunit. When a sigma factor is associated with the core the holoenzyme is formed, which can initiate transcription. Mg(2+) is required as a cofactor. It depends on Zn(2+) as a cofactor.

The enzyme catalyses RNA(n) + a ribonucleoside 5'-triphosphate = RNA(n+1) + diphosphate. Functionally, DNA-dependent RNA polymerase catalyzes the transcription of DNA into RNA using the four ribonucleoside triphosphates as substrates. The sequence is that of DNA-directed RNA polymerase subunit beta' from Sphingopyxis alaskensis (strain DSM 13593 / LMG 18877 / RB2256) (Sphingomonas alaskensis).